Reading from the N-terminus, the 278-residue chain is Protein FixR (278 aa).

40 to 64 (LLTGASRGIGHATAKLFSEAGWRII) contributes to the NAD(+) binding site. Substrate is bound at residue S175. Y189 (proton acceptor) is an active-site residue.

It belongs to the short-chain dehydrogenases/reductases (SDR) family.

In Bradyrhizobium diazoefficiens (strain JCM 10833 / BCRC 13528 / IAM 13628 / NBRC 14792 / USDA 110), this protein is Protein FixR (fixR).